Here is a 325-residue protein sequence, read N- to C-terminus: MSSFLDYSVMSGEGSSCSVRAFHSDHGITTFQSCAVSVNNCGTDDRFMASRASPDGIPHQSYQAAVSSLGLAYGAHSACSSSYAPQSFCTTYNHYPLNQEVEPAAGFPQCGPLMYSGNISSSVVSQHRQGYGTTPLGQLQYTHSAYGAGHEQPSPFTGCSNPLSPLHAAHLEACCSPLSESASSAQTFDWMKVKRNPPKTGRSGEYGYGGQPNTVRTNFTTKQLTELEKEFHFNKYLTRARRVEIAAALQLNETQVKIWFQNRRMKQKKREKEGLLPTKPTSSDSGERNQEKVEDGESEKSVSAPSTPSPTSSTVSSGADSYPSN.

The Antp-type hexapeptide motif lies at 187–192 (TFDWMK). 2 disordered regions span residues 194 to 215 (KRNP…PNTV) and 264 to 325 (RMKQ…YPSN). Residues 212–271 (PNTVRTNFTTKQLTELEKEFHFNKYLTRARRVEIAAALQLNETQVKIWFQNRRMKQKKRE) constitute a DNA-binding region (homeobox). Residues 285 to 300 (SGERNQEKVEDGESEK) are compositionally biased toward basic and acidic residues. Low complexity predominate over residues 301–317 (SVSAPSTPSPTSSTVSS).

It belongs to the Antp homeobox family. Labial subfamily.

It localises to the nucleus. Its function is as follows. Sequence-specific transcription factor which is part of a developmental regulatory system that provides cells with specific positional identities on the anterior-posterior axis. The chain is Homeobox protein Hox-A1a (hoxa1a) from Takifugu rubripes (Japanese pufferfish).